The primary structure comprises 717 residues: Aryl hydrocarbon receptor nuclear translocator 2 (717 aa).

Disordered stretches follow at residues 1–20 (MATPAAVNPPEMASDIPGSV) and 35–74 (MAGAMPARGGKRRSGMDFDDEDGEGPSKFSRENHSEIERR). Arginine 42 is modified (omega-N-methylarginine). Over residues 63–73 (FSRENHSEIER) the composition is skewed to basic and acidic residues. A bHLH domain is found at 63 to 116 (FSRENHSEIERRRRNKMTQYITELSDMVPTCSALARKPDKLTILRMAVSHMKSM). 2 PAS domains span residues 134-209 (TEQE…MTGR) and 323-393 (PVCM…VKLK). A PAC domain is found at 398–441 (SVMYRFRTKNREWMLIRTSSFTFQNPYSDEIEYIICTNTNVKQL). The tract at residues 548–717 (NDIQSSSSTG…DLGMFPPFSE (170 aa)) is disordered. 2 stretches are compositionally biased toward polar residues: residues 549–574 (DIQSSSSTGQNMSQISRQLNQSQVAW) and 585–605 (QIPSQSSKTQSSPFGIGTSHT). A compositionally biased stretch (low complexity) spans 610 to 625 (PSSYSPLSSPATSSPS). Residues 642–651 (SGQSSGQFQG) are compositionally biased toward polar residues. A compositionally biased stretch (low complexity) spans 658-680 (SQWQSQHHGQQSGEQHSHQQPGQ).

As to quaternary structure, efficient DNA binding requires dimerization with another bHLH protein. Heterodimer with NPAS4. Heterodimer with SIM1. Heterodimer with the aryl hydrocarbon receptor (AHR) or the SIM1 protein. Interacts with TACC3.

The protein localises to the nucleus. Functionally, transcription factor that plays a role in the development of the hypothalamo-pituitary axis, postnatal brain growth, and visual and renal function. Specifically recognizes the xenobiotic response element (XRE). The chain is Aryl hydrocarbon receptor nuclear translocator 2 (ARNT2) from Homo sapiens (Human).